The primary structure comprises 197 residues: Recombination protein RecR (197 aa).

A C4-type zinc finger spans residues 56–71 (CSVCGNFDTIDPCAIC). The region spanning 79-174 (SMLCVVEDVA…TVSGLAHGVP (96 aa)) is the Toprim domain.

This sequence belongs to the RecR family.

Its function is as follows. May play a role in DNA repair. It seems to be involved in an RecBC-independent recombinational process of DNA repair. It may act with RecF and RecO. In Paramagnetospirillum magneticum (strain ATCC 700264 / AMB-1) (Magnetospirillum magneticum), this protein is Recombination protein RecR.